The sequence spans 259 residues: NAD kinase (259 aa).

Asp-43 serves as the catalytic Proton acceptor. Residues 43–44 (DG), 111–112 (NE), and Arg-136 each bind NAD(+).

Belongs to the NAD kinase family. A divalent metal cation serves as cofactor.

It is found in the cytoplasm. It carries out the reaction NAD(+) + ATP = ADP + NADP(+) + H(+). Its function is as follows. Involved in the regulation of the intracellular balance of NAD and NADP, and is a key enzyme in the biosynthesis of NADP. Catalyzes specifically the phosphorylation on 2'-hydroxyl of the adenosine moiety of NAD to yield NADP. The chain is NAD kinase from Mycoplasma genitalium (strain ATCC 33530 / DSM 19775 / NCTC 10195 / G37) (Mycoplasmoides genitalium).